The chain runs to 548 residues: Natural resistance-associated macrophage protein 1 (548 aa).

The tract at residues 1–38 is disordered; it reads MSGDTGPPKQGGTRYGSISSPPSPEPQQAPPGGTYLSE. Residues 1–55 lie on the Cytoplasmic side of the membrane; the sequence is MSGDTGPPKQGGTRYGSISSPPSPEPQQAPPGGTYLSEKIPIPDTESGTFSLRKL. The chain crosses the membrane as a helical span at residues 56–73; sequence WAFTGPGFLMSIAFLDPG. The Extracellular portion of the chain corresponds to 74–82; the sequence is NIESDLQAG. The helical transmembrane segment at 83 to 102 threads the bilayer; it reads AVAGFKLLWVLLWATVLGLL. Over 103-139 the chain is Cytoplasmic; sequence CQRLAARLGVVTGKDLGEVCHLYYPKVPRILLWLTIE. A helical membrane pass occupies residues 140–160; the sequence is LAIVGSDMQEVIGTAIAFSLL. Residues 161–164 are Extracellular-facing; the sequence is SAGR. Residues 165–184 form a helical membrane-spanning segment; it reads IPLWGGVLITVVDTFFFLFL. At 185–193 the chain is on the cytoplasmic side; it reads DNYGLRKLE. Residues 194-214 traverse the membrane as a helical segment; sequence AFFGFLITIMALTFGYEYVVA. The Extracellular segment spans residues 215–237; the sequence is QPAQGALLQGLFLPSCPGCGQPE. A helical membrane pass occupies residues 238–256; sequence LLQAVGIIGAIIMPHNIYL. Over 257–284 the chain is Cytoplasmic; the sequence is HSSLVKSREVDRSRRADIREANMYFLIE. A helical membrane pass occupies residues 285–304; sequence ATIALSVSFLINLFVMAVFG. The Extracellular segment spans residues 305-346; sequence QAFYKQTNQAAFNICADSSLHDYAPIFPRNNLTVAVDIYQGG. Asn-335 is a glycosylation site (N-linked (GlcNAc...) asparagine). The helical transmembrane segment at 347–366 threads the bilayer; that stretch reads VILGCLFGPPALYIWAVGLL. Over 367-397 the chain is Cytoplasmic; the sequence is AAGQSSTMTGTYAGQFVMEGFLKLRWSRFAR. A helical transmembrane segment spans residues 398–415; the sequence is VLLTRSCAILPTVLLAVF. Over 416–426 the chain is Extracellular; the sequence is RDLRDLSGLND. Residues 427–447 form a helical membrane-spanning segment; it reads LLNVLQSLLLPFAVLPILTFT. Over 448-463 the chain is Cytoplasmic; the sequence is SMPALMQEFANGLVSK. The chain crosses the membrane as a helical span at residues 464-485; it reads VITSSIMVLVCAVNLYFVISYL. The Extracellular portion of the chain corresponds to 486-493; sequence PSLPHPAY. The chain crosses the membrane as a helical span at residues 494 to 513; it reads FSLVALLAAAYLGLTTYLVW. Residues 514 to 548 lie on the Cytoplasmic side of the membrane; sequence TCLITQGATLLAHSSHQRFLYGLPEEDQEKGRTSG.

It belongs to the NRAMP family.

It is found in the late endosome membrane. It localises to the lysosome membrane. It carries out the reaction Zn(2+)(in) + H(+)(out) = Zn(2+)(out) + H(+)(in). The enzyme catalyses Fe(2+)(in) + H(+)(out) = Fe(2+)(out) + H(+)(in). It catalyses the reaction Mn(2+)(in) + H(+)(out) = Mn(2+)(out) + H(+)(in). Macrophage-specific antiporter that fluxes metal ions in either direction against a proton gradient. Localized to late endosomal lysosomal membranes, delivers bivalent cations from the cytosol into these acidic compartments where they may directly affect antimicrobial activity. Involved in iron metabolism and host natural resistance to infection with intracellular parasites. Pathogen resistance involves sequestration of Fe(2+) and Mn(2+), cofactors of both prokaryotic and eukaryotic catalases and superoxide dismutases, not only to protect the macrophage against its own generation of reactive oxygen species, but to deny the cations to the pathogen for synthesis of its protective enzymes. This is Natural resistance-associated macrophage protein 1 (SLC11A1) from Bos taurus (Bovine).